The chain runs to 1094 residues: Protein transport protein Sec24C (1094 aa).

Residues 1 to 338 are disordered; that stretch reads MNVNQSVPPV…PIQVIEDDRN (338 aa). Positions 8-19 are enriched in pro residues; that stretch reads PPVPPFGQPQPI. Low complexity-rich tracts occupy residues 20 to 29 and 60 to 77; these read YPGYHQSSYG and SRAP…AQAP. The segment covering 90 to 101 has biased composition (polar residues); sequence DVQNGPSSTVQM. A compositionally biased stretch (pro residues) spans 123–132; the sequence is VLQPYGPPPT. 4 stretches are compositionally biased toward polar residues: residues 133-144, 165-175, 189-215, and 240-251; these read SAQVATQLSGMQ, SLASASGSFPN, PLSQ…SFTP, and SVSQPNHVSSPP. T214 carries the phosphothreonine modification. The span at 273 to 282 shows a compositional bias: low complexity; sequence PQQPGYQPQQ. Positions 425, 428, 447, and 450 each coordinate Zn(2+). The segment at 425-450 is zinc finger-like; sequence CNRCKAYMCPFMQFIEGGRRFQCCFC. Residues 962-1034 form a Gelsolin-like repeat; that stretch reads TTEPPAVRAS…DNPLSKKVRG (73 aa).

This sequence belongs to the SEC23/SEC24 family. SEC24 subfamily. COPII is composed of at least five proteins: the Sec23/24 complex, the Sec13/31 complex and Sar1. Interacts with TMED2 and TMED10. Interacts with GOSR2 (via IxM motif) and STX5 (via IxM motif); recruits GOSR2 and STX5 into COPII-coated vesicles. Interacts with DDHD1. Interacts with STING1; promoting STING1 translocation to the COPII vesicles. Ubiquitous.

The protein localises to the cytoplasmic vesicle. It localises to the COPII-coated vesicle membrane. Its subcellular location is the endoplasmic reticulum membrane. It is found in the cytoplasm. The protein resides in the cytosol. Component of the coat protein complex II (COPII) which promotes the formation of transport vesicles from the endoplasmic reticulum (ER). The coat has two main functions, the physical deformation of the endoplasmic reticulum membrane into vesicles and the selection of cargo molecules for their transport to the Golgi complex. Plays a central role in cargo selection within the COPII complex and together with SEC24D may have a different specificity compared to SEC24A and SEC24B. May more specifically package GPI-anchored proteins through the cargo receptor TMED10. May also be specific for IxM motif-containing cargos like the SNAREs GOSR2 and STX5. This chain is Protein transport protein Sec24C, found in Homo sapiens (Human).